The chain runs to 431 residues: Adenylosuccinate synthetase (431 aa).

Residues 13–19 (GDEGKGK) and 41–43 (GHT) contribute to the GTP site. Residue Asp14 is the Proton acceptor of the active site. Mg(2+)-binding residues include Asp14 and Gly41. IMP contacts are provided by residues 14 to 17 (DEGK), 39 to 42 (NAGH), Thr130, Arg144, Gln225, Thr240, and Arg304. His42 serves as the catalytic Proton donor. 300–306 (ATTGRKR) is a substrate binding site. GTP contacts are provided by residues Arg306, 332–334 (KLD), and 415–417 (STG).

The protein belongs to the adenylosuccinate synthetase family. Homodimer. It depends on Mg(2+) as a cofactor.

It localises to the cytoplasm. The enzyme catalyses IMP + L-aspartate + GTP = N(6)-(1,2-dicarboxyethyl)-AMP + GDP + phosphate + 2 H(+). It functions in the pathway purine metabolism; AMP biosynthesis via de novo pathway; AMP from IMP: step 1/2. Functionally, plays an important role in the de novo pathway of purine nucleotide biosynthesis. Catalyzes the first committed step in the biosynthesis of AMP from IMP. The protein is Adenylosuccinate synthetase of Shewanella loihica (strain ATCC BAA-1088 / PV-4).